Consider the following 164-residue polypeptide: Lipoprotein signal peptidase (164 aa).

3 consecutive transmembrane segments (helical) span residues 12–32 (WLWLVVVVLIIDLGSKYLILQ), 70–90 (WFFAGIAIGISVTLVVMMYRS), and 102–122 (ALIIGGALGNLFDRLWHGFVV). Active-site residues include Asp123 and Asp141. A helical transmembrane segment spans residues 137–157 (FNLADTAICVGAALIVLEGFL).

It belongs to the peptidase A8 family.

The protein resides in the cell inner membrane. The enzyme catalyses Release of signal peptides from bacterial membrane prolipoproteins. Hydrolyzes -Xaa-Yaa-Zaa-|-(S,diacylglyceryl)Cys-, in which Xaa is hydrophobic (preferably Leu), and Yaa (Ala or Ser) and Zaa (Gly or Ala) have small, neutral side chains.. It participates in protein modification; lipoprotein biosynthesis (signal peptide cleavage). This protein specifically catalyzes the removal of signal peptides from prolipoproteins. The chain is Lipoprotein signal peptidase from Escherichia coli O157:H7.